A 203-amino-acid chain; its full sequence is ATP synthase subunit delta, chloroplastic (203 aa).

This sequence belongs to the ATPase delta chain family. F-type ATPases have 2 components, F(1) - the catalytic core - and F(0) - the membrane proton channel. F(1) has five subunits: alpha(3), beta(3), gamma(1), delta(1), epsilon(1). CF(0) has four main subunits: a(1), b(1), b'(1) and c(10-14). The alpha and beta chains form an alternating ring which encloses part of the gamma chain. F(1) is attached to F(0) by a central stalk formed by the gamma and epsilon chains, while a peripheral stalk is formed by the delta, b and b' chains.

The protein resides in the plastid. It is found in the chloroplast thylakoid membrane. In terms of biological role, f(1)F(0) ATP synthase produces ATP from ADP in the presence of a proton or sodium gradient. F-type ATPases consist of two structural domains, F(1) containing the extramembraneous catalytic core and F(0) containing the membrane proton channel, linked together by a central stalk and a peripheral stalk. During catalysis, ATP synthesis in the catalytic domain of F(1) is coupled via a rotary mechanism of the central stalk subunits to proton translocation. Its function is as follows. This protein is part of the stalk that links CF(0) to CF(1). It either transmits conformational changes from CF(0) to CF(1) or is implicated in proton conduction. In Heterosigma akashiwo (strain NIES-293 / 8280G21-1), this protein is ATP synthase subunit delta, chloroplastic.